Reading from the N-terminus, the 64-residue chain is Alpha-conotoxin-like Ac1.1b (64 aa).

The first 21 residues, 1-21, serve as a signal peptide directing secretion; it reads MGMRMMFTLFLLVVLTTTVVS. The propeptide occupies 22 to 47; it reads FPSDSASDGRDDEAKDERSDMYKSKR. A disordered region spans residues 23–46; it reads PSDSASDGRDDEAKDERSDMYKSK. Over residues 28-44 the composition is skewed to basic and acidic residues; it reads SDGRDDEAKDERSDMYK. Cystine bridges form between Cys-51-Cys-56 and Cys-52-Cys-62. Residue Cys-62 is modified to Cysteine amide.

The protein belongs to the conotoxin A superfamily. In terms of tissue distribution, expressed by the venom duct.

The protein localises to the secreted. Functionally, alpha-conotoxins act on postsynaptic membranes, they bind to the nicotinic acetylcholine receptors (nAChR) and thus inhibit them. In Conus achatinus (Little frog cone), this protein is Alpha-conotoxin-like Ac1.1b.